We begin with the raw amino-acid sequence, 94 residues long: Co-chaperonin GroES (94 aa).

Belongs to the GroES chaperonin family. In terms of assembly, heptamer of 7 subunits arranged in a ring. Interacts with the chaperonin GroEL.

The protein localises to the cytoplasm. Functionally, together with the chaperonin GroEL, plays an essential role in assisting protein folding. The GroEL-GroES system forms a nano-cage that allows encapsulation of the non-native substrate proteins and provides a physical environment optimized to promote and accelerate protein folding. GroES binds to the apical surface of the GroEL ring, thereby capping the opening of the GroEL channel. This Listeria innocua serovar 6a (strain ATCC BAA-680 / CLIP 11262) protein is Co-chaperonin GroES.